The following is a 312-amino-acid chain: MKLISCNANRPLSDAIADYLDMRLTRSEVKTFADQEIFVRIDENVRGEDVFVIQSTSYPANDNLMQLLIMMDALRRASARRITAVIPYFGYARQDRKTDGRTPISAKLVANLISTAGADRVLTVDLHAGQIQGFFDIPTDNLFGGPVMVDDIKERYGKEKIIVVSPDVGGVVRARSLAKRLDDADLAIVDKRRPEAGKSEVMNIIGDVRGARCIMLDDMCDSGGTLANAAAALKEHGASSVSAYVTHGVLSGSAVERIEKSVLDELVMTDTIQPSEHALKSKNIRVLPISPLLGEAIRRIANEESVSKLFDR.

Residues 34-36 (DQE) and 93-94 (RQ) contribute to the ATP site. Residues H127 and D167 each coordinate Mg(2+). Residue K191 is part of the active site. D-ribose 5-phosphate contacts are provided by residues R193, D217, and 221 to 225 (DSGGT).

This sequence belongs to the ribose-phosphate pyrophosphokinase family. Class I subfamily. In terms of assembly, homohexamer. The cofactor is Mg(2+).

It localises to the cytoplasm. The enzyme catalyses D-ribose 5-phosphate + ATP = 5-phospho-alpha-D-ribose 1-diphosphate + AMP + H(+). It participates in metabolic intermediate biosynthesis; 5-phospho-alpha-D-ribose 1-diphosphate biosynthesis; 5-phospho-alpha-D-ribose 1-diphosphate from D-ribose 5-phosphate (route I): step 1/1. Its function is as follows. Involved in the biosynthesis of the central metabolite phospho-alpha-D-ribosyl-1-pyrophosphate (PRPP) via the transfer of pyrophosphoryl group from ATP to 1-hydroxyl of ribose-5-phosphate (Rib-5-P). The chain is Ribose-phosphate pyrophosphokinase from Hyphomonas neptunium (strain ATCC 15444).